The sequence spans 486 residues: Glutamyl-tRNA(Gln) amidotransferase subunit A (486 aa).

Active-site charge relay system residues include Lys-74 and Ser-149. Ser-173 functions as the Acyl-ester intermediate in the catalytic mechanism.

The protein belongs to the amidase family. GatA subfamily. In terms of assembly, heterotrimer of A, B and C subunits.

It catalyses the reaction L-glutamyl-tRNA(Gln) + L-glutamine + ATP + H2O = L-glutaminyl-tRNA(Gln) + L-glutamate + ADP + phosphate + H(+). Functionally, allows the formation of correctly charged Gln-tRNA(Gln) through the transamidation of misacylated Glu-tRNA(Gln) in organisms which lack glutaminyl-tRNA synthetase. The reaction takes place in the presence of glutamine and ATP through an activated gamma-phospho-Glu-tRNA(Gln). This is Glutamyl-tRNA(Gln) amidotransferase subunit A from Prochlorococcus marinus (strain NATL2A).